A 366-amino-acid polypeptide reads, in one-letter code: Chorismate synthase (366 aa).

NADP(+)-binding residues include arginine 48 and arginine 54. FMN contacts are provided by residues 125-127 (RSS), 238-239 (NA), glycine 278, 293-297 (KPTSS), and arginine 319.

The protein belongs to the chorismate synthase family. As to quaternary structure, homotetramer. FMNH2 serves as cofactor.

The catalysed reaction is 5-O-(1-carboxyvinyl)-3-phosphoshikimate = chorismate + phosphate. It functions in the pathway metabolic intermediate biosynthesis; chorismate biosynthesis; chorismate from D-erythrose 4-phosphate and phosphoenolpyruvate: step 7/7. Catalyzes the anti-1,4-elimination of the C-3 phosphate and the C-6 proR hydrogen from 5-enolpyruvylshikimate-3-phosphate (EPSP) to yield chorismate, which is the branch point compound that serves as the starting substrate for the three terminal pathways of aromatic amino acid biosynthesis. This reaction introduces a second double bond into the aromatic ring system. The sequence is that of Chorismate synthase from Burkholderia vietnamiensis (strain G4 / LMG 22486) (Burkholderia cepacia (strain R1808)).